The following is a 285-amino-acid chain: 4-hydroxybenzoate octaprenyltransferase (285 aa).

Transmembrane regions (helical) follow at residues 17–37 (PVGI…AGAG), 41–61 (PKVL…GCVI), 92–112 (LLLF…LNPL), 135–155 (HWPQ…AFAA), 158–178 (GTVP…ATVY), 216–236 (ALLL…YYYL), and 263–283 (AFLN…LHYL).

This sequence belongs to the UbiA prenyltransferase family. Mg(2+) is required as a cofactor.

The protein localises to the cell inner membrane. It catalyses the reaction all-trans-octaprenyl diphosphate + 4-hydroxybenzoate = 4-hydroxy-3-(all-trans-octaprenyl)benzoate + diphosphate. It participates in cofactor biosynthesis; ubiquinone biosynthesis. Catalyzes the prenylation of para-hydroxybenzoate (PHB) with an all-trans polyprenyl group. Mediates the second step in the final reaction sequence of ubiquinone-8 (UQ-8) biosynthesis, which is the condensation of the polyisoprenoid side chain with PHB, generating the first membrane-bound Q intermediate 3-octaprenyl-4-hydroxybenzoate. In Nitrosococcus oceani (strain ATCC 19707 / BCRC 17464 / JCM 30415 / NCIMB 11848 / C-107), this protein is 4-hydroxybenzoate octaprenyltransferase.